Consider the following 119-residue polypeptide: Small ribosomal subunit protein bS16 (119 aa).

The tract at residues 81–119 (GLAKRPARNNPKKAEPGQKAKERAAARAEKAGAGDDAAA) is disordered. The span at 92 to 113 (KKAEPGQKAKERAAARAEKAGA) shows a compositional bias: basic and acidic residues.

Belongs to the bacterial ribosomal protein bS16 family.

The chain is Small ribosomal subunit protein bS16 from Methylobacterium sp. (strain 4-46).